The chain runs to 150 residues: MSNPQVAKVFLGVDYGERRIGLAYAAYPLGISLPIGFIATGKTLEATAKLLVGIIQERRVSTVVLGNPLPMQKGQKSALQEDILKLSSLLQESCPVEVILWDERLSSAQAERMLKGDCGLSRKKRKGKTDSIAATLILTSFLEHSPRLPS.

The protein belongs to the YqgF nuclease family.

Its subcellular location is the cytoplasm. Its function is as follows. Could be a nuclease involved in processing of the 5'-end of pre-16S rRNA. The protein is Putative pre-16S rRNA nuclease of Chlamydia abortus (strain DSM 27085 / S26/3) (Chlamydophila abortus).